The chain runs to 890 residues: Agglutinin-like protein ARB_02240 (890 aa).

Residues Met1 to Ala20 form the signal peptide. 4 N-linked (GlcNAc...) asparagine glycosylation sites follow: Asn106, Asn217, Asn583, and Asn654. The segment at Ile680 to Thr872 is disordered. Low complexity-rich tracts occupy residues Thr693–Ser753 and Thr760–Thr790. The segment covering Gly791 to Pro802 has biased composition (polar residues). 2 stretches are compositionally biased toward low complexity: residues Ser803 to Thr812 and Ser821 to Thr837. Over residues Thr838–Thr848 the composition is skewed to gly residues. The GPI-anchor amidated glycine moiety is linked to residue Gly864. Positions Ala865–Ile890 are cleaved as a propeptide — removed in mature form.

Belongs to the ALS family. Post-translationally, the GPI-anchor is attached to the protein in the endoplasmic reticulum and serves to target the protein to the cell surface. There, the glucosamine-inositol phospholipid moiety is cleaved off and the GPI-modified mannoprotein is covalently attached via its lipidless GPI glycan remnant to the 1,6-beta-glucan of the outer cell wall layer.

The protein resides in the secreted. It is found in the cell membrane. It localises to the cell wall. Cell surface adhesion protein which mediates cell agglutination and host tissue adherence. The sequence is that of Agglutinin-like protein ARB_02240 from Arthroderma benhamiae (strain ATCC MYA-4681 / CBS 112371) (Trichophyton mentagrophytes).